Here is a 188-residue protein sequence, read N- to C-terminus: Large ribosomal subunit protein eL18B (188 aa).

A disordered region spans residues 153-188 (GKAPGTPHSRTKPYVLSKGRKFERARGRRASRGYKN). Basic residues predominate over residues 178–188 (RGRRASRGYKN).

The protein belongs to the eukaryotic ribosomal protein eL18 family. In terms of assembly, component of the large ribosomal subunit.

The protein localises to the cytoplasm. It is found in the cytosol. The protein resides in the rough endoplasmic reticulum. Component of the large ribosomal subunit. The ribosome is a large ribonucleoprotein complex responsible for the synthesis of proteins in the cell. This is Large ribosomal subunit protein eL18B (rpl18-b) from Xenopus laevis (African clawed frog).